Here is a 305-residue protein sequence, read N- to C-terminus: Transmembrane protein 74 (305 aa).

Ser11 carries the post-translational modification Phosphoserine. Residues 122–132 (QRSQRSPSAKG) show a composition bias toward polar residues. Residues 122–143 (QRSQRSPSAKGSNHPVDLGWGN) form a disordered region. Helical transmembrane passes span 178-198 (FISA…SYIV) and 232-252 (VIAG…LLMM).

It belongs to the TMEM74 family.

It is found in the lysosome membrane. The protein localises to the cytoplasmic vesicle. Its subcellular location is the autophagosome membrane. Functionally, plays an essential role in autophagy. TMEM74-induced autophagy may involve PI3K signal transduction. This Mus musculus (Mouse) protein is Transmembrane protein 74 (Tmem74).